A 155-amino-acid chain; its full sequence is MKNIIINIQYCCKNNKNIPKKLYFKKWIQKILCKKKNINIITIRIVDEWEIKKLNFNYRKKNKPTNILSFPFNKFIKINYKLLGDLVLCKNIIEKESLKYNKSLESHWAHITIHGTLHLLGYDHQNNKEADIMERLENKIMLSLNYKKPHILKSF.

Zn(2+) is bound by residues His-114, His-118, and His-124.

It belongs to the endoribonuclease YbeY family. The cofactor is Zn(2+).

It localises to the cytoplasm. Single strand-specific metallo-endoribonuclease involved in late-stage 70S ribosome quality control and in maturation of the 3' terminus of the 16S rRNA. This chain is Endoribonuclease YbeY, found in Buchnera aphidicola subsp. Acyrthosiphon pisum (strain APS) (Acyrthosiphon pisum symbiotic bacterium).